A 1697-amino-acid polypeptide reads, in one-letter code: Phosphatidylinositol 3-kinase 3 (1697 aa).

Disordered stretches follow at residues 57–91 (RSIN…TQPC), 169–229 (INNN…DSSI), 244–279 (KTTE…ENEI), 310–376 (KKNN…NSVG), 398–428 (SWTS…SGSS), and 440–504 (DLLK…NNDE). Low complexity-rich tracts occupy residues 60–87 (NNNN…NNNN), 170–196 (NNNN…NNNN), and 212–222 (NNNSNNNNNIN). 2 stretches are compositionally biased toward low complexity: residues 312–374 (NNNN…TTNS) and 398–408 (SWTSSKPTSSS). 2 stretches are compositionally biased toward polar residues: residues 409–428 (IGFA…SGSS) and 444–456 (SPSS…SDIF). Residues 457 to 503 (NENNNNNNNNNNNNNNNNNNNNNNNNNNNNNNNNEELINNNNNNNND) show a composition bias toward low complexity. The 87-residue stretch at 737-823 (PEFFVIRVHL…KGEIDLTMVE (87 aa)) folds into the PI3K-RBD domain. The C2 PI3K-type domain occupies 888-1036 (VTENLQVRLL…QAIIIAFEFK (149 aa)). The PIK helical domain maps to 1060-1238 (GNELPVVTME…RVLSSGFLRY (179 aa)). The PI3K/PI4K catalytic domain maps to 1304–1581 (IPEKCKSMDS…LIHESIGTLT (278 aa)). A G-loop region spans residues 1310–1316 (SMDSAKV). Residues 1447–1455 (GIGDRHNDN) form a catalytic loop region. The segment at 1466–1492 (HIDFGHFLGNFKTFAGFQREKAPFVLT) is activation loop. A compositionally biased stretch (low complexity) spans 1609-1625 (ASSLNLNKNKPSSQSKL). Positions 1609–1697 (ASSLNLNKNK…DTEKENSIDK (89 aa)) are disordered. Repeat copies occupy residues 1622–1626 (QSKLD), 1627–1631 (LSRSD), 1632–1636 (LSRSD), 1642–1646 (SSRLD), and 1647–1651 (LSRSD). The 5 X 5 AA approximate repeats stretch occupies residues 1622 to 1651 (QSKLDLSRSDLSRSDSSRSDSSRLDLSRSD). 2 stretches are compositionally biased toward basic and acidic residues: residues 1626 to 1681 (DLSR…DKDN) and 1688 to 1697 (DTEKENSIDK). The segment at 1659–1672 (KEKEKEKEKEKEKE) is 7 X 2 AA tandem repeats of K-E.

Belongs to the PI3/PI4-kinase family.

The catalysed reaction is a 1,2-diacyl-sn-glycero-3-phospho-(1D-myo-inositol) + ATP = a 1,2-diacyl-sn-glycero-3-phospho-(1D-myo-inositol-3-phosphate) + ADP + H(+). The chain is Phosphatidylinositol 3-kinase 3 (pikC) from Dictyostelium discoideum (Social amoeba).